Here is a 1392-residue protein sequence, read N- to C-terminus: DNA-directed RNA polymerase subunit beta'' (1392 aa).

The Zn(2+) site is built by Cys224, Cys295, Cys302, and Cys305.

The protein belongs to the RNA polymerase beta' chain family. RpoC2 subfamily. As to quaternary structure, in plastids the minimal PEP RNA polymerase catalytic core is composed of four subunits: alpha, beta, beta', and beta''. When a (nuclear-encoded) sigma factor is associated with the core the holoenzyme is formed, which can initiate transcription. It depends on Zn(2+) as a cofactor.

Its subcellular location is the plastid. The protein resides in the chloroplast. It carries out the reaction RNA(n) + a ribonucleoside 5'-triphosphate = RNA(n+1) + diphosphate. DNA-dependent RNA polymerase catalyzes the transcription of DNA into RNA using the four ribonucleoside triphosphates as substrates. This chain is DNA-directed RNA polymerase subunit beta'', found in Solanum bulbocastanum (Wild potato).